A 425-amino-acid chain; its full sequence is Serine--tRNA ligase (425 aa).

233-235 lines the L-serine pocket; sequence TAE. 264–266 lines the ATP pocket; that stretch reads RAE. Glu287 serves as a coordination point for L-serine. 351-354 serves as a coordination point for ATP; it reads EISS. Ser387 serves as a coordination point for L-serine.

This sequence belongs to the class-II aminoacyl-tRNA synthetase family. Type-1 seryl-tRNA synthetase subfamily. In terms of assembly, homodimer. The tRNA molecule binds across the dimer.

Its subcellular location is the cytoplasm. The enzyme catalyses tRNA(Ser) + L-serine + ATP = L-seryl-tRNA(Ser) + AMP + diphosphate + H(+). It catalyses the reaction tRNA(Sec) + L-serine + ATP = L-seryl-tRNA(Sec) + AMP + diphosphate + H(+). The protein operates within aminoacyl-tRNA biosynthesis; selenocysteinyl-tRNA(Sec) biosynthesis; L-seryl-tRNA(Sec) from L-serine and tRNA(Sec): step 1/1. In terms of biological role, catalyzes the attachment of serine to tRNA(Ser). Is also able to aminoacylate tRNA(Sec) with serine, to form the misacylated tRNA L-seryl-tRNA(Sec), which will be further converted into selenocysteinyl-tRNA(Sec). In Clostridium botulinum (strain Alaska E43 / Type E3), this protein is Serine--tRNA ligase.